An 812-amino-acid chain; its full sequence is 1,4-alpha-glucan branching enzyme GlgB (812 aa).

Positions 1–11 are enriched in polar residues; it reads MNNGDVNNGTA. The tract at residues 1–83 is disordered; that stretch reads MNNGDVNNGT…SALPADPPAV (83 aa). Residues 49 to 64 are compositionally biased toward low complexity; it reads SSASAQPGQTADDPAV. The span at 65–83 shows a compositional bias: pro residues; that stretch reads PSAPPSAPPSALPADPPAV. The active-site Nucleophile is aspartate 490. Glutamate 543 (proton donor) is an active-site residue.

Belongs to the glycosyl hydrolase 13 family. GlgB subfamily. As to quaternary structure, monomer.

It carries out the reaction Transfers a segment of a (1-&gt;4)-alpha-D-glucan chain to a primary hydroxy group in a similar glucan chain.. It participates in glycan biosynthesis; glycogen biosynthesis. Its function is as follows. Catalyzes the formation of the alpha-1,6-glucosidic linkages in glycogen by scission of a 1,4-alpha-linked oligosaccharide from growing alpha-1,4-glucan chains and the subsequent attachment of the oligosaccharide to the alpha-1,6 position. The protein is 1,4-alpha-glucan branching enzyme GlgB of Frankia casuarinae (strain DSM 45818 / CECT 9043 / HFP020203 / CcI3).